The chain runs to 142 residues: Aspartate 1-decarboxylase (142 aa).

S25 acts as the Schiff-base intermediate with substrate; via pyruvic acid in catalysis. The residue at position 25 (S25) is a Pyruvic acid (Ser). T57 lines the substrate pocket. Residue Y58 is the Proton donor of the active site. G73 to A75 contributes to the substrate binding site.

It belongs to the PanD family. As to quaternary structure, heterooctamer of four alpha and four beta subunits. It depends on pyruvate as a cofactor. In terms of processing, is synthesized initially as an inactive proenzyme, which is activated by self-cleavage at a specific serine bond to produce a beta-subunit with a hydroxyl group at its C-terminus and an alpha-subunit with a pyruvoyl group at its N-terminus.

Its subcellular location is the cytoplasm. It carries out the reaction L-aspartate + H(+) = beta-alanine + CO2. The protein operates within cofactor biosynthesis; (R)-pantothenate biosynthesis; beta-alanine from L-aspartate: step 1/1. Functionally, catalyzes the pyruvoyl-dependent decarboxylation of aspartate to produce beta-alanine. The chain is Aspartate 1-decarboxylase from Arthrobacter sp. (strain FB24).